Here is a 262-residue protein sequence, read N- to C-terminus: Polyamine aminopropyltransferase (262 aa).

The PABS domain occupies 1 to 249; it reads MWITQEITPY…DIHRAAFALP (249 aa). Residue Asn-29 participates in S-methyl-5'-thioadenosine binding. Spermidine is bound at residue Asp-83. The active-site Proton acceptor is Asp-155.

It belongs to the spermidine/spermine synthase family. In terms of assembly, homodimer or homotetramer.

It is found in the cytoplasm. The enzyme catalyses S-adenosyl 3-(methylsulfanyl)propylamine + putrescine = S-methyl-5'-thioadenosine + spermidine + H(+). It participates in amine and polyamine biosynthesis; spermidine biosynthesis; spermidine from putrescine: step 1/1. In terms of biological role, catalyzes the irreversible transfer of a propylamine group from the amino donor S-adenosylmethioninamine (decarboxy-AdoMet) to putrescine (1,4-diaminobutane) to yield spermidine. This chain is Polyamine aminopropyltransferase, found in Helicobacter acinonychis (strain Sheeba).